The sequence spans 238 residues: Orotate phosphoribosyltransferase (238 aa).

Lys29 contributes to the 5-phospho-alpha-D-ribose 1-diphosphate binding site. Residue Phe37–Phe38 coordinates orotate. Residues Tyr87–Lys88, Arg118, Lys119, Lys122, His124, and Asp144–Ala152 contribute to the 5-phospho-alpha-D-ribose 1-diphosphate site. Thr148 and Arg176 together coordinate orotate.

This sequence belongs to the purine/pyrimidine phosphoribosyltransferase family. PyrE subfamily. Homodimer.

The enzyme catalyses orotidine 5'-phosphate + diphosphate = orotate + 5-phospho-alpha-D-ribose 1-diphosphate. Its pathway is pyrimidine metabolism; UMP biosynthesis via de novo pathway; UMP from orotate: step 1/2. In terms of biological role, catalyzes the transfer of a ribosyl phosphate group from 5-phosphoribose 1-diphosphate to orotate, leading to the formation of orotidine monophosphate (OMP). The protein is Orotate phosphoribosyltransferase (URA5) of Coccidioides immitis (strain RS) (Valley fever fungus).